We begin with the raw amino-acid sequence, 714 residues long: Fatty acid oxidation complex subunit alpha (714 aa).

The interval M1–P190 is enoyl-CoA hydratase. Positions A306 to Q714 are 3-hydroxyacyl-CoA dehydrogenase.

In the N-terminal section; belongs to the enoyl-CoA hydratase/isomerase family. It in the central section; belongs to the 3-hydroxyacyl-CoA dehydrogenase family. In terms of assembly, heterotetramer of two alpha chains (FadJ) and two beta chains (FadI).

The protein resides in the cytoplasm. The catalysed reaction is a (3S)-3-hydroxyacyl-CoA = a (2E)-enoyl-CoA + H2O. It carries out the reaction a 4-saturated-(3S)-3-hydroxyacyl-CoA = a (3E)-enoyl-CoA + H2O. The enzyme catalyses a (3S)-3-hydroxyacyl-CoA + NAD(+) = a 3-oxoacyl-CoA + NADH + H(+). It catalyses the reaction (3S)-3-hydroxybutanoyl-CoA = (3R)-3-hydroxybutanoyl-CoA. It participates in lipid metabolism; fatty acid beta-oxidation. Its function is as follows. Catalyzes the formation of a hydroxyacyl-CoA by addition of water on enoyl-CoA. Also exhibits 3-hydroxyacyl-CoA epimerase and 3-hydroxyacyl-CoA dehydrogenase activities. This Escherichia coli (strain SE11) protein is Fatty acid oxidation complex subunit alpha.